An 85-amino-acid polypeptide reads, in one-letter code: Small ribosomal subunit protein bS20 (85 aa).

The protein belongs to the bacterial ribosomal protein bS20 family.

Binds directly to 16S ribosomal RNA. This chain is Small ribosomal subunit protein bS20, found in Borrelia turicatae (strain 91E135).